The primary structure comprises 416 residues: Serine hydroxymethyltransferase (416 aa).

(6S)-5,6,7,8-tetrahydrofolate is bound by residues leucine 121 and 125 to 127; that span reads GHL. Residue lysine 229 is modified to N6-(pyridoxal phosphate)lysine.

It belongs to the SHMT family. In terms of assembly, homodimer. It depends on pyridoxal 5'-phosphate as a cofactor.

The protein localises to the cytoplasm. It carries out the reaction (6R)-5,10-methylene-5,6,7,8-tetrahydrofolate + glycine + H2O = (6S)-5,6,7,8-tetrahydrofolate + L-serine. The protein operates within one-carbon metabolism; tetrahydrofolate interconversion. Its pathway is amino-acid biosynthesis; glycine biosynthesis; glycine from L-serine: step 1/1. In terms of biological role, catalyzes the reversible interconversion of serine and glycine with tetrahydrofolate (THF) serving as the one-carbon carrier. This reaction serves as the major source of one-carbon groups required for the biosynthesis of purines, thymidylate, methionine, and other important biomolecules. Also exhibits THF-independent aldolase activity toward beta-hydroxyamino acids, producing glycine and aldehydes, via a retro-aldol mechanism. This is Serine hydroxymethyltransferase from Bordetella avium (strain 197N).